Here is a 379-residue protein sequence, read N- to C-terminus: Chaperone protein DnaJ (379 aa).

Positions 7 to 72 constitute a J domain; that stretch reads CYYETLEVDR…DKRAAYDRYG (66 aa). The CR-type zinc finger occupies 135-213; sequence GKTAQIEIPV…CSGAGRIERE (79 aa). The Zn(2+) site is built by cysteine 148, cysteine 151, cysteine 165, cysteine 168, cysteine 187, cysteine 190, cysteine 201, and cysteine 204. CXXCXGXG motif repeat units lie at residues 148–155, 165–172, 187–194, and 201–208; these read CESCSGTG, CSMCGGAG, CPGCQGRG, and CPACSGAG.

Belongs to the DnaJ family. In terms of assembly, homodimer. Zn(2+) serves as cofactor.

Its subcellular location is the cytoplasm. In terms of biological role, participates actively in the response to hyperosmotic and heat shock by preventing the aggregation of stress-denatured proteins and by disaggregating proteins, also in an autonomous, DnaK-independent fashion. Unfolded proteins bind initially to DnaJ; upon interaction with the DnaJ-bound protein, DnaK hydrolyzes its bound ATP, resulting in the formation of a stable complex. GrpE releases ADP from DnaK; ATP binding to DnaK triggers the release of the substrate protein, thus completing the reaction cycle. Several rounds of ATP-dependent interactions between DnaJ, DnaK and GrpE are required for fully efficient folding. Also involved, together with DnaK and GrpE, in the DNA replication of plasmids through activation of initiation proteins. This chain is Chaperone protein DnaJ, found in Rhodopseudomonas palustris (strain BisB18).